Consider the following 91-residue polypeptide: Large ribosomal subunit protein eL37B (91 aa).

Cys-19, Cys-22, Cys-34, and Cys-37 together coordinate Zn(2+). The C4-type zinc-finger motif lies at 19 to 37 (CRRCGKRSFHIQKSTCACC).

It belongs to the eukaryotic ribosomal protein eL37 family. In terms of assembly, component of the large ribosomal subunit (LSU). Mature yeast ribosomes consist of a small (40S) and a large (60S) subunit. The 40S small subunit contains 1 molecule of ribosomal RNA (18S rRNA) and at least 33 different proteins. The large 60S subunit contains 3 rRNA molecules (25S, 5.8S and 5S rRNA) and at least 46 different proteins. Zn(2+) serves as cofactor.

The protein localises to the cytoplasm. Its function is as follows. Component of the ribosome, a large ribonucleoprotein complex responsible for the synthesis of proteins in the cell. The small ribosomal subunit (SSU) binds messenger RNAs (mRNAs) and translates the encoded message by selecting cognate aminoacyl-transfer RNA (tRNA) molecules. The large subunit (LSU) contains the ribosomal catalytic site termed the peptidyl transferase center (PTC), which catalyzes the formation of peptide bonds, thereby polymerizing the amino acids delivered by tRNAs into a polypeptide chain. The nascent polypeptides leave the ribosome through a tunnel in the LSU and interact with protein factors that function in enzymatic processing, targeting, and the membrane insertion of nascent chains at the exit of the ribosomal tunnel. This is Large ribosomal subunit protein eL37B (rpl3702) from Schizosaccharomyces pombe (strain 972 / ATCC 24843) (Fission yeast).